The chain runs to 196 residues: MSQGLQLLFLGCACSLAPAMAMREVTVACSETADLPCTAPWDPQLSYAVSWAKVSESGTESVELPESKQNSSFEAPRRRAYSLTIQNTTICSSGTYRCALQELGGQRNLSGTVVLKVTGCPKEATESTFRKYRAEAVLLFSLVVFYLTLIIFTCKFARLQSIFPDISKPGTEQAFLPVTSPSKHLGPVTLPKTETV.

Positions 1-21 are cleaved as a signal peptide; the sequence is MSQGLQLLFLGCACSLAPAMA. An Ig-like V-type domain is found at 22-110; that stretch reads MREVTVACSE…QELGGQRNLS (89 aa). Residues 22–133 lie on the Extracellular side of the membrane; it reads MREVTVACSE…ATESTFRKYR (112 aa). C37 and C98 are joined by a disulfide. N-linked (GlcNAc...) asparagine glycans are attached at residues N70, N87, and N108. Residues 134–154 form a helical membrane-spanning segment; the sequence is AEAVLLFSLVVFYLTLIIFTC. The Cytoplasmic portion of the chain corresponds to 155–196; the sequence is KFARLQSIFPDISKPGTEQAFLPVTSPSKHLGPVTLPKTETV.

In terms of assembly, monomer. Homodimer. Homotrimer. Interacts with MARCHF1; this interaction antagonizes MARCHF1-mediated MHC II and CD86 down-regulation. As to expression, abundantly expressed in spleen and brain, but is also detected in most tissues analyzed.

It localises to the membrane. Transmembrane glycoprotein predominantly found on the surface of many immune cells including dendritic cells or lymphocytes that plays various roles in immune response regulation. Plays an essential role in CD4(+) T-selection, differentiation and stability by regulating the activity of the major E3 ubiquitin ligase responsible for controlling MHC II trafficking MARCHF8. Also inhibits MARCHF1 association with MHC II and ubiquitination of MHCII. In addition, acts as an important modulator of protective responses against acute infections. This Mus musculus (Mouse) protein is CD83 antigen (Cd83).